The following is a 684-amino-acid chain: Protein ecdysoneless (684 aa).

The segment covering 491-501 (EPELDSDDDEP) has biased composition (acidic residues). 2 disordered regions span residues 491–528 (EPEL…CQRN) and 603–624 (TSVG…EDDF).

This sequence belongs to the ECD family. As to expression, expressed in the ecdysone-producing larval ring gland, nervous system, imaginal disks and gonads.

It localises to the cytoplasm. Its function is as follows. Required in both the follicle cells and the germline for oocyte development. The chain is Protein ecdysoneless from Drosophila melanogaster (Fruit fly).